A 150-amino-acid polypeptide reads, in one-letter code: Group IIC secretory phospholipase A2 (150 aa).

The first 20 residues, 1-20, serve as a signal peptide directing secretion; that stretch reads MKGIAVFLVFIFCWTTSTLS. Disulfide bonds link Cys-46–Cys-143, Cys-48–Cys-64, Cys-63–Cys-121, Cys-69–Cys-150, Cys-70–Cys-114, Cys-79–Cys-107, Cys-97–Cys-112, and Cys-99–Cys-105. Ca(2+) is bound by residues Tyr-47, Gly-49, and Gly-51. The active site involves His-67. Asp-68 serves as a coordination point for Ca(2+). Asn-92 carries an N-linked (GlcNAc...) asparagine glycan. Asp-115 is an active-site residue.

This sequence belongs to the phospholipase A2 family. The cofactor is Ca(2+).

It localises to the secreted. It carries out the reaction a 1,2-diacyl-sn-glycero-3-phosphocholine + H2O = a 1-acyl-sn-glycero-3-phosphocholine + a fatty acid + H(+). PA2 catalyzes the calcium-dependent hydrolysis of the 2-acyl groups in 3-sn-phosphoglycerides. In Rattus norvegicus (Rat), this protein is Group IIC secretory phospholipase A2 (Pla2g2c).